Here is a 344-residue protein sequence, read N- to C-terminus: Phenylalanine--tRNA ligase alpha subunit (344 aa).

Position 256 (glutamate 256) interacts with Mg(2+).

It belongs to the class-II aminoacyl-tRNA synthetase family. Phe-tRNA synthetase alpha subunit type 1 subfamily. As to quaternary structure, tetramer of two alpha and two beta subunits. Requires Mg(2+) as cofactor.

It is found in the cytoplasm. It carries out the reaction tRNA(Phe) + L-phenylalanine + ATP = L-phenylalanyl-tRNA(Phe) + AMP + diphosphate + H(+). The polypeptide is Phenylalanine--tRNA ligase alpha subunit (Anoxybacillus flavithermus (strain DSM 21510 / WK1)).